Reading from the N-terminus, the 169-residue chain is Mu-like prophage FluMu host-nuclease inhibitor protein gam (169 aa).

This sequence to phage Mu protein gam.

In terms of biological role, protects linear double-stranded DNA of Mu genome from exonuclease degradation. In Haemophilus influenzae (strain ATCC 51907 / DSM 11121 / KW20 / Rd), this protein is Mu-like prophage FluMu host-nuclease inhibitor protein gam.